Consider the following 20-residue polypeptide: Cytochrome c oxidase subunit 5B heart, mitochondrial (20 aa).

The tract at residues Xaa-1 to Ala-20 is disordered.

It belongs to the cytochrome c oxidase subunit 5B family. Component of the cytochrome c oxidase (complex IV, CIV), a multisubunit enzyme composed of 14 subunits. The complex is composed of a catalytic core of 3 subunits MT-CO1, MT-CO2 and MT-CO3, encoded in the mitochondrial DNA, and 11 supernumerary subunits COX4I, COX5A, COX5B, COX6A, COX6B, COX6C, COX7A, COX7B, COX7C, COX8 and NDUFA4, which are encoded in the nuclear genome. The complex exists as a monomer or a dimer and forms supercomplexes (SCs) in the inner mitochondrial membrane with NADH-ubiquinone oxidoreductase (complex I, CI) and ubiquinol-cytochrome c oxidoreductase (cytochrome b-c1 complex, complex III, CIII), resulting in different assemblies (supercomplex SCI(1)III(2)IV(1) and megacomplex MCI(2)III(2)IV(2)).

The protein resides in the mitochondrion inner membrane. It participates in energy metabolism; oxidative phosphorylation. Component of the cytochrome c oxidase, the last enzyme in the mitochondrial electron transport chain which drives oxidative phosphorylation. The respiratory chain contains 3 multisubunit complexes succinate dehydrogenase (complex II, CII), ubiquinol-cytochrome c oxidoreductase (cytochrome b-c1 complex, complex III, CIII) and cytochrome c oxidase (complex IV, CIV), that cooperate to transfer electrons derived from NADH and succinate to molecular oxygen, creating an electrochemical gradient over the inner membrane that drives transmembrane transport and the ATP synthase. Cytochrome c oxidase is the component of the respiratory chain that catalyzes the reduction of oxygen to water. Electrons originating from reduced cytochrome c in the intermembrane space (IMS) are transferred via the dinuclear copper A center (CU(A)) of subunit 2 and heme A of subunit 1 to the active site in subunit 1, a binuclear center (BNC) formed by heme A3 and copper B (CU(B)). The BNC reduces molecular oxygen to 2 water molecules using 4 electrons from cytochrome c in the IMS and 4 protons from the mitochondrial matrix. The sequence is that of Cytochrome c oxidase subunit 5B heart, mitochondrial from Oncorhynchus mykiss (Rainbow trout).